The chain runs to 503 residues: Methylthioalkylmalate synthase 3, chloroplastic (503 aa).

Residues 1–51 constitute a chloroplast transit peptide; that stretch reads MASLLLTSSSMITTSCRSMVLRSGLPIGSSFPSLRLTRPYDKATLFVSCCS. In terms of domain architecture, Pyruvate carboxyltransferase spans 85–359; that stretch reads VRVLDTTLRD…YTKIDSRQIM (275 aa).

The protein belongs to the alpha-IPM synthase/homocitrate synthase family. Mn(2+) is required as a cofactor. In terms of tissue distribution, highly expressed in roots, leaves, and siliques. Lower amounts in stems and flowers.

Its subcellular location is the plastid. The protein localises to the chloroplast. It carries out the reaction an omega-(methylsulfanyl)-2-oxoalkanoate + acetyl-CoA + H2O = a 2-(omega-methylsulfanyl)alkylmalate + CoA + H(+). With respect to regulation, not activated by ATP. Its function is as follows. Determines the side chain length of aliphatic glucosinolate structures. Accepts all the omega-methylthio-2-oxoalkanoic acids needed to form the known C3 to C8 glucosinolates. Also able to convert pyruvate to citramalate, 2-oxoisovalerate to isopropylmalate, 4-methyl-2-oxopentanoate and 5-methyl-2-oxohexanoate for Leu-derived glucosinolates, 3-methyl-2-oxopentanoate for Ile-derived glucosinolates and phenylpyruvate to phenylethylglucosinolate. The protein is Methylthioalkylmalate synthase 3, chloroplastic (MAM3) of Arabidopsis thaliana (Mouse-ear cress).